The primary structure comprises 75 residues: Protein RALF-like 9 (75 aa).

Positions 1-28 (MGMSKSIKVILSLALVVFLALAATKVEA) are cleaved as a signal peptide. Disulfide bonds link Cys46/Cys54 and Cys66/Cys72.

This sequence belongs to the plant rapid alkalinization factor (RALF) family.

The protein resides in the secreted. In terms of biological role, cell signaling peptide that may regulate plant stress, growth, and development. Mediates a rapid alkalinization of extracellular space by mediating a transient increase in the cytoplasmic Ca(2+) concentration leading to a calcium-dependent signaling events through a cell surface receptor and a concomitant activation of some intracellular mitogen-activated protein kinases. The chain is Protein RALF-like 9 (RALFL9) from Arabidopsis thaliana (Mouse-ear cress).